The primary structure comprises 342 residues: Fructose-1,6-bisphosphatase class 1 (342 aa).

Mg(2+) contacts are provided by Glu97, Asp119, Leu121, and Asp122. Residues 122–125 (DGSS), Asn215, Tyr247, and Lys280 contribute to the substrate site. Glu286 is a binding site for Mg(2+).

The protein belongs to the FBPase class 1 family. As to quaternary structure, homotetramer. Mg(2+) serves as cofactor.

Its subcellular location is the cytoplasm. It carries out the reaction beta-D-fructose 1,6-bisphosphate + H2O = beta-D-fructose 6-phosphate + phosphate. The protein operates within carbohydrate biosynthesis; gluconeogenesis. In Leptospira interrogans serogroup Icterohaemorrhagiae serovar copenhageni (strain Fiocruz L1-130), this protein is Fructose-1,6-bisphosphatase class 1.